Consider the following 164-residue polypeptide: Class I hydrophobin rodA (164 aa).

A signal peptide spans 1 to 18 (MRFSISALVLGLAATVYA). N-linked (GlcNAc...) asparagine glycosylation is present at Asn-50. Cystine bridges form between Cys-60/Cys-138, Cys-68/Cys-132, Cys-69/Cys-109, and Cys-139/Cys-157.

Belongs to the fungal hydrophobin family. Self-assembles to form functional amyloid fibrils called rodlets. Self-assembly into fibrillar rodlets occurs spontaneously at hydrophobic:hydrophilic interfaces and the rodlets further associate laterally to form amphipathic monolayers.

It is found in the secreted. Its subcellular location is the cell wall. Functionally, aerial growth, conidiation, and dispersal of filamentous fungi in the environment rely upon a capability of their secreting small amphipathic proteins called hydrophobins (HPBs) with low sequence identity. Class I can self-assemble into an outermost layer of rodlet bundles on aerial cell surfaces, conferring cellular hydrophobicity that supports fungal growth, development and dispersal; whereas Class II form highly ordered films at water-air interfaces through intermolecular interactions but contribute nothing to the rodlet structure. RodA is a class I hydrophobin involved in the cell surface hydrophobicity and conidiation under aerial conditions. The surface rodlet layer of the conidial cell wall makes airborne conidia of filamentous fungi inert to both innate and adaptive immunity. The polypeptide is Class I hydrophobin rodA (Penicillium camembertii).